The primary structure comprises 144 residues: MAKRGGPRTVGVPWRFHLTPGIFMNSLVNVADNSGAKVVKVIGVVGHYSKNVHRRIPGVSVGDMVVVSVQEGKPEMRKQILRAIVVRQRRPFRRPDGTWVAFEDNAVVIVTEEGQVKGTEVHGPVAMEAAQRWPQVASIATMII.

The protein belongs to the universal ribosomal protein uL14 family. In terms of assembly, part of the 50S ribosomal subunit. Forms a cluster with proteins L3 and L24e, part of which may contact the 16S rRNA in 2 intersubunit bridges.

Its function is as follows. Binds to 23S rRNA. Forms part of two intersubunit bridges in the 70S ribosome. The sequence is that of Large ribosomal subunit protein uL14 from Caldivirga maquilingensis (strain ATCC 700844 / DSM 13496 / JCM 10307 / IC-167).